A 497-amino-acid polypeptide reads, in one-letter code: SPI-2 type 3 secretion system secretin (497 aa).

Residues M1 to S20 form the signal peptide.

It belongs to the bacterial secretin family. T3SS SctC subfamily. The core secretion machinery of the T3SS is composed of approximately 20 different proteins, including cytoplasmic components, a base, an export apparatus and a needle. This subunit is part of the base, which anchors the injectisome in the bacterial cell envelope. Forms a stable homooligomeric complex.

The protein resides in the cell outer membrane. In terms of biological role, component of the type III secretion system (T3SS), also called injectisome, which is used to inject bacterial effector proteins into eukaryotic host cells. Forms a ring-shaped multimeric structure with an apparent central pore in the outer membrane. Required for secretion of some type III-secreted effectors including the SpvB exotoxin. In Salmonella typhimurium (strain 14028s / SGSC 2262), this protein is SPI-2 type 3 secretion system secretin.